Consider the following 345-residue polypeptide: Fructose-1,6-bisphosphatase class 1 1 (345 aa).

4 residues coordinate Mg(2+): Glu90, Asp109, Leu111, and Asp112. Substrate contacts are provided by residues Asp112–Ser115 and Asn200. Glu272 serves as a coordination point for Mg(2+).

This sequence belongs to the FBPase class 1 family. As to quaternary structure, homotetramer. Mg(2+) is required as a cofactor.

Its subcellular location is the cytoplasm. It catalyses the reaction beta-D-fructose 1,6-bisphosphate + H2O = beta-D-fructose 6-phosphate + phosphate. Its pathway is carbohydrate biosynthesis; gluconeogenesis. The chain is Fructose-1,6-bisphosphatase class 1 1 from Nitrobacter hamburgensis (strain DSM 10229 / NCIMB 13809 / X14).